We begin with the raw amino-acid sequence, 260 residues long: Ubiquinone/menaquinone biosynthesis C-methyltransferase UbiE (260 aa).

S-adenosyl-L-methionine-binding positions include threonine 83, aspartate 104, and 132-133; that span reads NA.

The protein belongs to the class I-like SAM-binding methyltransferase superfamily. MenG/UbiE family.

It catalyses the reaction a 2-demethylmenaquinol + S-adenosyl-L-methionine = a menaquinol + S-adenosyl-L-homocysteine + H(+). It carries out the reaction a 2-methoxy-6-(all-trans-polyprenyl)benzene-1,4-diol + S-adenosyl-L-methionine = a 5-methoxy-2-methyl-3-(all-trans-polyprenyl)benzene-1,4-diol + S-adenosyl-L-homocysteine + H(+). The protein operates within quinol/quinone metabolism; menaquinone biosynthesis; menaquinol from 1,4-dihydroxy-2-naphthoate: step 2/2. Its pathway is cofactor biosynthesis; ubiquinone biosynthesis. Functionally, methyltransferase required for the conversion of demethylmenaquinol (DMKH2) to menaquinol (MKH2) and the conversion of 2-polyprenyl-6-methoxy-1,4-benzoquinol (DDMQH2) to 2-polyprenyl-3-methyl-6-methoxy-1,4-benzoquinol (DMQH2). This Bartonella quintana (strain Toulouse) (Rochalimaea quintana) protein is Ubiquinone/menaquinone biosynthesis C-methyltransferase UbiE.